The chain runs to 131 residues: Small ribosomal subunit protein uS8 (131 aa).

Belongs to the universal ribosomal protein uS8 family. Part of the 30S ribosomal subunit. Contacts proteins S5 and S12.

In terms of biological role, one of the primary rRNA binding proteins, it binds directly to 16S rRNA central domain where it helps coordinate assembly of the platform of the 30S subunit. This is Small ribosomal subunit protein uS8 from Cupriavidus necator (strain ATCC 17699 / DSM 428 / KCTC 22496 / NCIMB 10442 / H16 / Stanier 337) (Ralstonia eutropha).